Here is a 339-residue protein sequence, read N- to C-terminus: NADH-quinone oxidoreductase subunit H (339 aa).

The next 8 helical transmembrane spans lie at 9–29 (IFPL…LILC), 82–102 (ILFV…WAVI), 115–135 (VGVL…IIAG), 161–181 (MGLV…SQIV), 187–207 (MPWW…ISVL), 235–255 (MGFA…SAMT), 275–295 (IPGF…FLWI), and 311–331 (GWKV…SVLI).

This sequence belongs to the complex I subunit 1 family. NDH-1 is composed of 14 different subunits. Subunits NuoA, H, J, K, L, M, N constitute the membrane sector of the complex.

It is found in the cell inner membrane. The enzyme catalyses a quinone + NADH + 5 H(+)(in) = a quinol + NAD(+) + 4 H(+)(out). Its function is as follows. NDH-1 shuttles electrons from NADH, via FMN and iron-sulfur (Fe-S) centers, to quinones in the respiratory chain. The immediate electron acceptor for the enzyme in this species is believed to be ubiquinone. Couples the redox reaction to proton translocation (for every two electrons transferred, four hydrogen ions are translocated across the cytoplasmic membrane), and thus conserves the redox energy in a proton gradient. This subunit may bind ubiquinone. The protein is NADH-quinone oxidoreductase subunit H of Rickettsia bellii (strain OSU 85-389).